Here is a 73-residue protein sequence, read N- to C-terminus: Large ribosomal subunit protein bL31 (73 aa).

Zn(2+) contacts are provided by cysteine 16, cysteine 18, cysteine 36, and cysteine 39.

The protein belongs to the bacterial ribosomal protein bL31 family. Type A subfamily. As to quaternary structure, part of the 50S ribosomal subunit. Zn(2+) serves as cofactor.

Its function is as follows. Binds the 23S rRNA. This Desulfotalea psychrophila (strain LSv54 / DSM 12343) protein is Large ribosomal subunit protein bL31.